We begin with the raw amino-acid sequence, 1028 residues long: Ubiquitin conjugation factor E4 A (1028 aa).

The tract at residues K33–S57 is disordered. K386 bears the N6-acetyllysine mark. One can recognise a U-box domain in the interval D949–Q1023.

Belongs to the ubiquitin conjugation factor E4 family. In terms of tissue distribution, expressed in liver, heart, brain, kidney and testis.

The protein resides in the cytoplasm. The enzyme catalyses S-ubiquitinyl-[E2 ubiquitin-conjugating enzyme]-L-cysteine + [acceptor protein]-L-lysine = [E2 ubiquitin-conjugating enzyme]-L-cysteine + N(6)-ubiquitinyl-[acceptor protein]-L-lysine.. It functions in the pathway protein modification; protein ubiquitination. Functionally, ubiquitin-protein ligase that probably functions as an E3 ligase in conjunction with specific E1 and E2 ligases. May also function as an E4 ligase mediating the assembly of polyubiquitin chains on substrates ubiquitinated by another E3 ubiquitin ligase. Mediates 'Lys-48'-linked polyubiquitination of substrates. This chain is Ubiquitin conjugation factor E4 A, found in Mus musculus (Mouse).